Here is a 256-residue protein sequence, read N- to C-terminus: Adenylate kinase (256 aa).

An ATP-binding site is contributed by 45-50 (GAGKGT). The segment at 67-96 (ATGDLLRQQVAMGTDLGKQAKKIMDQGALV) is NMP. AMP is bound by residues threonine 68, arginine 73, 94–96 (ALV), 123–126 (GFPR), and glutamine 130. An LID region spans residues 164 to 201 (GRLIHPGSGRSYHKIFSPPKQPMKDDITGEPLVQRSDD). ATP-binding positions include arginine 165 and 174 to 175 (SY). The AMP site is built by arginine 198 and arginine 209. Residue glutamine 237 coordinates ATP.

It belongs to the adenylate kinase family. AK2 subfamily. In terms of assembly, monomer.

It is found in the cytoplasm. Its subcellular location is the cytosol. The protein localises to the mitochondrion intermembrane space. The enzyme catalyses AMP + ATP = 2 ADP. In terms of biological role, catalyzes the reversible transfer of the terminal phosphate group between ATP and AMP. Plays an important role in cellular energy homeostasis and in adenine nucleotide metabolism. Adenylate kinase activity is critical for regulation of the phosphate utilization and the AMP de novo biosynthesis pathways. This is Adenylate kinase from Malassezia globosa (strain ATCC MYA-4612 / CBS 7966) (Dandruff-associated fungus).